The primary structure comprises 308 residues: tRNA pseudouridine synthase B (308 aa).

The active-site Nucleophile is Asp-47.

Belongs to the pseudouridine synthase TruB family. Type 1 subfamily.

The enzyme catalyses uridine(55) in tRNA = pseudouridine(55) in tRNA. Responsible for synthesis of pseudouridine from uracil-55 in the psi GC loop of transfer RNAs. The chain is tRNA pseudouridine synthase B from Xanthomonas euvesicatoria pv. vesicatoria (strain 85-10) (Xanthomonas campestris pv. vesicatoria).